A 48-amino-acid chain; its full sequence is uncharacterized protein (48 aa).

This is an uncharacterized protein from Haemophilus influenzae (strain ATCC 51907 / DSM 11121 / KW20 / Rd).